Here is a 276-residue protein sequence, read N- to C-terminus: CTD small phosphatase-like protein (276 aa).

Residues 1–31 are disordered; that stretch reads MDGPAIITQVTNPKEDEARSPVAGEKASQRN. Positions 102–260 constitute an FCP1 homology domain; the sequence is LDYGKKCVVI…LDLIPFFEGL (159 aa). Asp112 serves as the catalytic 4-aspartylphosphate intermediate. Mg(2+)-binding residues include Asp112, Asp114, and Asn223. Asp114 (proton donor) is an active-site residue.

As to quaternary structure, monomer. Interacts with REST. Mg(2+) is required as a cofactor.

It localises to the nucleus. The enzyme catalyses O-phospho-L-seryl-[protein] + H2O = L-seryl-[protein] + phosphate. The catalysed reaction is O-phospho-L-threonyl-[protein] + H2O = L-threonyl-[protein] + phosphate. Preferentially catalyzes the dephosphorylation of 'Ser-5' within the tandem 7 residue repeats in the C-terminal domain (CTD) of the largest RNA polymerase II subunit POLR2A. Negatively regulates RNA polymerase II transcription, possibly by controlling the transition from initiation/capping to processive transcript elongation. Recruited by REST to neuronal genes that contain RE-1 elements, leading to neuronal gene silencing in non-neuronal cells. This chain is CTD small phosphatase-like protein (Ctdspl), found in Mus musculus (Mouse).